The primary structure comprises 530 residues: Transcription factor SPT20 homolog (530 aa).

Residue S296 is modified to Phosphoserine. A disordered region spans residues 419–530; sequence CPVKMSHSSS…PASSSQRHES (112 aa). Composition is skewed to low complexity over residues 424–436 and 466–475; these read SHSS…LNSG and SSSGNSSSGN. T490 is modified (phosphothreonine). Residues 514 to 530 are compositionally biased toward low complexity; that stretch reads LSPAALSPASSSQRHES. Phosphoserine occurs at positions 515 and 520.

This sequence belongs to the SPT20 family. Interacts with ATG9A. Interacts with MAPK14.

Required for MAP kinase p38 (MAPK11, MAPK12, MAPK13 and/or MAPK14) activation during gastrulation. Required for down-regulation of E-cadherin during gastrulation by regulating E-cadherin protein level downstream from NCK-interacting kinase (NIK) and independently of the regulation of transcription by FGF signaling and Snail. Required for starvation-induced ATG9A trafficking during autophagy. The sequence is that of Transcription factor SPT20 homolog (Supt20h) from Rattus norvegicus (Rat).